Consider the following 262-residue polypeptide: Indole-3-glycerol phosphate synthase (262 aa).

Belongs to the TrpC family.

It carries out the reaction 1-(2-carboxyphenylamino)-1-deoxy-D-ribulose 5-phosphate + H(+) = (1S,2R)-1-C-(indol-3-yl)glycerol 3-phosphate + CO2 + H2O. It functions in the pathway amino-acid biosynthesis; L-tryptophan biosynthesis; L-tryptophan from chorismate: step 4/5. The protein is Indole-3-glycerol phosphate synthase of Clostridium acetobutylicum (strain ATCC 824 / DSM 792 / JCM 1419 / IAM 19013 / LMG 5710 / NBRC 13948 / NRRL B-527 / VKM B-1787 / 2291 / W).